Here is a 101-residue protein sequence, read N- to C-terminus: Putative pterin-4-alpha-carbinolamine dehydratase (101 aa).

The protein belongs to the pterin-4-alpha-carbinolamine dehydratase family.

It carries out the reaction (4aS,6R)-4a-hydroxy-L-erythro-5,6,7,8-tetrahydrobiopterin = (6R)-L-erythro-6,7-dihydrobiopterin + H2O. In Rhizobium leguminosarum bv. trifolii (strain WSM2304), this protein is Putative pterin-4-alpha-carbinolamine dehydratase.